We begin with the raw amino-acid sequence, 393 residues long: MTTSQRTAAILVAAGRGLRAGAGGPKQYRTIGGRTVIHRALAAFAEHPEVAVVQPVVNPDDIDVFNAAVAGLRHEAPARGGATRQASVLAGLEALVPHKPEIVLIHDAARPFVTPAVISRAIIAANKTGAAIPVAPVTDTIKEVGASGDITATPERAKLRIAQTPQTFRFDTILEAHRRAAREGLTEFTDDAAIAEWAGLTVATFEGDVANMKLTTPEDFVREEARLAASLGDIRTGTGYDVHAFGEGDHVWLCGLRVPHTKGFLAHSDGDVGLHALVDAILGALADGDIGSHFPPSDMKWKGASSDQFLKYAIERVAARGGRVANLEVTMICERPKIGPLRDQMRARIAEISGVDISRIAVKATTSERLGFTGREEGIAATASATIRLPWGA.

The 2-C-methyl-D-erythritol 4-phosphate cytidylyltransferase stretch occupies residues 1–234 (MTTSQRTAAI…ARLAASLGDI (234 aa)). Residues 235–393 (RTGTGYDVHA…SATIRLPWGA (159 aa)) form a 2-C-methyl-D-erythritol 2,4-cyclodiphosphate synthase region. Residues Asp241 and His243 each coordinate a divalent metal cation. Residues 241 to 243 (DVH) and 267 to 268 (HS) each bind 4-CDP-2-C-methyl-D-erythritol 2-phosphate. His275 contributes to the a divalent metal cation binding site. 4-CDP-2-C-methyl-D-erythritol 2-phosphate contacts are provided by residues 289–291 (DIG), 365–368 (TTSE), Phe372, and Arg375.

This sequence in the N-terminal section; belongs to the IspD/TarI cytidylyltransferase family. IspD subfamily. The protein in the C-terminal section; belongs to the IspF family. A divalent metal cation is required as a cofactor.

The catalysed reaction is 2-C-methyl-D-erythritol 4-phosphate + CTP + H(+) = 4-CDP-2-C-methyl-D-erythritol + diphosphate. It catalyses the reaction 4-CDP-2-C-methyl-D-erythritol 2-phosphate = 2-C-methyl-D-erythritol 2,4-cyclic diphosphate + CMP. Its pathway is isoprenoid biosynthesis; isopentenyl diphosphate biosynthesis via DXP pathway; isopentenyl diphosphate from 1-deoxy-D-xylulose 5-phosphate: step 2/6. The protein operates within isoprenoid biosynthesis; isopentenyl diphosphate biosynthesis via DXP pathway; isopentenyl diphosphate from 1-deoxy-D-xylulose 5-phosphate: step 4/6. Its function is as follows. Bifunctional enzyme that catalyzes the formation of 4-diphosphocytidyl-2-C-methyl-D-erythritol from CTP and 2-C-methyl-D-erythritol 4-phosphate (MEP) (IspD), and catalyzes the conversion of 4-diphosphocytidyl-2-C-methyl-D-erythritol 2-phosphate (CDP-ME2P) to 2-C-methyl-D-erythritol 2,4-cyclodiphosphate (ME-CPP) with a corresponding release of cytidine 5-monophosphate (CMP) (IspF). In Bradyrhizobium sp. (strain ORS 278), this protein is Bifunctional enzyme IspD/IspF.